We begin with the raw amino-acid sequence, 186 residues long: Large ribosomal subunit protein uL15 (186 aa).

The segment at methionine 1 to valine 48 is disordered. The segment covering arginine 21–asparagine 35 has biased composition (gly residues).

This sequence belongs to the universal ribosomal protein uL15 family. As to quaternary structure, part of the 50S ribosomal subunit.

In terms of biological role, binds to the 23S rRNA. This is Large ribosomal subunit protein uL15 from Chlorobaculum tepidum (strain ATCC 49652 / DSM 12025 / NBRC 103806 / TLS) (Chlorobium tepidum).